Here is a 114-residue protein sequence, read N- to C-terminus: UPF0342 protein LSL_0473 (114 aa).

Belongs to the UPF0342 family.

This chain is UPF0342 protein LSL_0473, found in Ligilactobacillus salivarius (strain UCC118) (Lactobacillus salivarius).